A 425-amino-acid chain; its full sequence is Kynureninase (425 aa).

Pyridoxal 5'-phosphate contacts are provided by residues Leu105, Thr106, 133 to 136 (FPSD), Asp218, His221, and Tyr243. Position 244 is an N6-(pyridoxal phosphate)lysine (Lys244). Residues Trp274 and Asn302 each coordinate pyridoxal 5'-phosphate.

It belongs to the kynureninase family. As to quaternary structure, homodimer. It depends on pyridoxal 5'-phosphate as a cofactor.

It carries out the reaction L-kynurenine + H2O = anthranilate + L-alanine + H(+). The enzyme catalyses 3-hydroxy-L-kynurenine + H2O = 3-hydroxyanthranilate + L-alanine + H(+). It participates in amino-acid degradation; L-kynurenine degradation; L-alanine and anthranilate from L-kynurenine: step 1/1. Its pathway is cofactor biosynthesis; NAD(+) biosynthesis; quinolinate from L-kynurenine: step 2/3. Catalyzes the cleavage of L-kynurenine (L-Kyn) and L-3-hydroxykynurenine (L-3OHKyn) into anthranilic acid (AA) and 3-hydroxyanthranilic acid (3-OHAA), respectively. The protein is Kynureninase of Flavobacterium johnsoniae (strain ATCC 17061 / DSM 2064 / JCM 8514 / BCRC 14874 / CCUG 350202 / NBRC 14942 / NCIMB 11054 / UW101) (Cytophaga johnsonae).